The chain runs to 983 residues: Poly [ADP-ribose] polymerase 1 (983 aa).

PARP-type zinc fingers lie at residues 8-91 (WRAE…ESGA) and 114-194 (YGIE…KKAL). 8 residues coordinate Zn(2+): Cys20, Cys23, His52, Cys55, Cys126, Cys129, His156, and Cys159. The tract at residues 197-246 (AKTETAEARQTNSRAGTKRKNDSVDNEKSKLAKSSFDMSTSGALQPCSKE) is disordered. Residues 215–226 (RKNDSVDNEKSK) are compositionally biased toward basic and acidic residues. The 140-residue stretch at 236-375 (TSGALQPCSK…SVKPKRILRP (140 aa)) folds into the PADR1 zinc-binding domain. The interval 301–345 (GPLALCPMCSGHLSFSGGLYRCHGYISEWSKCSHSTLDPDRIKGK) is zinc ribbon. 4 residues coordinate Zn(2+): Cys306, Cys309, Cys322, and Cys332. Positions 369–397 (PKRILRPVLSGETSQGQGSKDATDSSRSE) are disordered. The span at 379–388 (GETSQGQGSK) shows a compositional bias: polar residues. A BRCT domain is found at 394–484 (SRSERLADLK…RKLPFDKYKI (91 aa)). In terms of domain architecture, WGR spans 511 to 611 (HCHILEDGNS…TNFQKQPGKF (101 aa)). The PARP alpha-helical domain occupies 633–751 (SSNLAPSLIE…DIEIASRIVG (119 aa)). Residues 758–983 (ESLDDKYKKL…LLKVRFKHKR (226 aa)) form the PARP catalytic domain.

It belongs to the ARTD/PARP family.

The protein localises to the nucleus. The enzyme catalyses NAD(+) + (ADP-D-ribosyl)n-acceptor = nicotinamide + (ADP-D-ribosyl)n+1-acceptor + H(+).. It carries out the reaction L-aspartyl-[protein] + NAD(+) = 4-O-(ADP-D-ribosyl)-L-aspartyl-[protein] + nicotinamide. The catalysed reaction is L-glutamyl-[protein] + NAD(+) = 5-O-(ADP-D-ribosyl)-L-glutamyl-[protein] + nicotinamide. Functionally, involved in the base excision repair (BER) pathway, by catalyzing the poly(ADP-ribosyl)ation of a limited number of acceptor proteins involved in chromatin architecture and in DNA metabolism. This modification follows DNA damages and appears as an obligatory step in a detection/signaling pathway leading to the reparation of DNA strand breaks. In Arabidopsis thaliana (Mouse-ear cress), this protein is Poly [ADP-ribose] polymerase 1 (PARP1).